The following is a 240-amino-acid chain: MRSVPRRERHRRLRNAKDCACRYHSPTPQIFDRLELLNQQLNYALPVGIISQAIITTDNYLGYSLSHYLFSGKRTAAFRSLDDISLWIEKGSLRQLIVDMEALPVSCIEALNQLRALSWQQSDIQIYLLVSDKTSAITQFIRMAGRFFVLSRRQNLASVREALLSASKPRLSESFSRTDWLMIETLAQGASLKEIARQQSVPYHRVVYRLKQLITLLNLPHRQSFLRLIQQLNVTFHDIF.

Its subcellular location is the fimbrium. In Salmonella typhimurium (strain LT2 / SGSC1412 / ATCC 700720), this protein is Fimbriae Y protein (fimY).